Consider the following 239-residue polypeptide: Uridylate kinase (239 aa).

An ATP-binding site is contributed by 13 to 16; the sequence is KVSG. Residue G55 coordinates UMP. Positions 56 and 60 each coordinate ATP. UMP-binding positions include D75 and 136–143; that span reads TGNPFCTT. The ATP site is built by T163, Q164, Y169, and D172.

It belongs to the UMP kinase family. As to quaternary structure, homohexamer.

The protein localises to the cytoplasm. The enzyme catalyses UMP + ATP = UDP + ADP. Its pathway is pyrimidine metabolism; CTP biosynthesis via de novo pathway; UDP from UMP (UMPK route): step 1/1. Inhibited by UTP. Its function is as follows. Catalyzes the reversible phosphorylation of UMP to UDP. In Rickettsia bellii (strain RML369-C), this protein is Uridylate kinase.